A 78-amino-acid chain; its full sequence is Large ribosomal subunit protein bL28 (78 aa).

The segment at 1–21 (MSRVCQLSGKRANNGMAVSHS) is disordered.

It belongs to the bacterial ribosomal protein bL28 family.

This Synechococcus sp. (strain RCC307) protein is Large ribosomal subunit protein bL28.